The sequence spans 137 residues: Putative nucleoside diphosphate kinase (137 aa).

ATP-binding residues include F45, R73, T79, R90, and N100. The active-site Pros-phosphohistidine intermediate is H103.

The protein belongs to the NDK family. The cofactor is Mg(2+).

It carries out the reaction a 2'-deoxyribonucleoside 5'-diphosphate + ATP = a 2'-deoxyribonucleoside 5'-triphosphate + ADP. It catalyses the reaction a ribonucleoside 5'-diphosphate + ATP = a ribonucleoside 5'-triphosphate + ADP. Major role in the synthesis of nucleoside triphosphates other than ATP. The ATP gamma phosphate is transferred to the NDP beta phosphate via a ping-pong mechanism, using a phosphorylated active-site intermediate. The sequence is that of Putative nucleoside diphosphate kinase (NME2P1) from Homo sapiens (Human).